The following is a 400-amino-acid chain: 1-deoxy-D-xylulose 5-phosphate reductoisomerase (400 aa).

The NADPH site is built by threonine 10, glycine 11, serine 12, isoleucine 13, glycine 36, asparagine 38, and asparagine 124. Position 125 (lysine 125) interacts with 1-deoxy-D-xylulose 5-phosphate. Residue glutamate 126 coordinates NADPH. Aspartate 150 is a binding site for Mn(2+). 1-deoxy-D-xylulose 5-phosphate-binding residues include serine 151, glutamate 152, serine 186, and histidine 209. Residue glutamate 152 coordinates Mn(2+). Residue glycine 215 coordinates NADPH. Serine 222, asparagine 227, lysine 228, and glutamate 231 together coordinate 1-deoxy-D-xylulose 5-phosphate. Glutamate 231 is a binding site for Mn(2+).

The protein belongs to the DXR family. Mg(2+) is required as a cofactor. Mn(2+) serves as cofactor.

The catalysed reaction is 2-C-methyl-D-erythritol 4-phosphate + NADP(+) = 1-deoxy-D-xylulose 5-phosphate + NADPH + H(+). It participates in isoprenoid biosynthesis; isopentenyl diphosphate biosynthesis via DXP pathway; isopentenyl diphosphate from 1-deoxy-D-xylulose 5-phosphate: step 1/6. In terms of biological role, catalyzes the NADPH-dependent rearrangement and reduction of 1-deoxy-D-xylulose-5-phosphate (DXP) to 2-C-methyl-D-erythritol 4-phosphate (MEP). This Aliivibrio fischeri (strain ATCC 700601 / ES114) (Vibrio fischeri) protein is 1-deoxy-D-xylulose 5-phosphate reductoisomerase.